The sequence spans 698 residues: Interleukin-17 receptor C (698 aa).

The first 21 residues, Met1 to Leu21, serve as a signal peptide directing secretion. Residues Glu22–Arg464 are Extracellular-facing. Asn182 carries an N-linked (GlcNAc...) asparagine glycan. Cysteines 190 and 202 form a disulfide. N-linked (GlcNAc...) asparagine glycosylation is found at Asn209, Asn249, Asn255, and Asn259. Cystine bridges form between Cys266/Cys316, Cys268/Cys284, Cys325/Cys334, Cys364/Cys378, Cys406/Cys413, and Cys440/Cys455. Residues Trp465–Leu485 form a helical membrane-spanning segment. The Cytoplasmic portion of the chain corresponds to Lys486–Glu698. One can recognise an SEFIR domain in the interval Ser496–Asp645.

In terms of assembly, homodimer; disulfide-linked. Heterodimer with IL17RA. Heterodimerization with IL17RA is independent of the cytoplasmic tail. Associates with non-glycosylated IL17RA constitutively. Binding of IL17A and IL17F induces association with glycosylated IL17RA. Forms complexes with 2:1 binding stoichiometry: two receptor chains for one interleukin molecule. IL17A homodimer preferentially drives the formation of IL17RA-IL17RC heterodimeric receptor complex, whereas IL17F homodimer forms predominantly complexes with IL17RC homodimer. IL17A-IL17F forms complexes with IL17RA-IL17RC, but with lower affinity when compared to IL17A homodimer. IL17RC chain cannot distinguish between IL17A and IL17F molecules, potentially enabling the formation of topologically distinct complexes. Interacts (through SEFIR domain and extended downstream region) with TRAF3IP2/ACT1 (phosphorylated). As to expression, highly expressed in colonic epithelial cells. Expressed in lung epithelial cells. Expressed in macrophages. Highly expressed in B-1a B cells and at a lower extent in B-1b and B-2 B cells (at protein level).

The protein localises to the cell membrane. Its function is as follows. Receptor for IL17A and IL17F, major effector cytokines of innate and adaptive immune system involved in antimicrobial host defense and maintenance of tissue integrity. Receptor for IL17A and IL17F homodimers as part of a heterodimeric complex with IL17RA. Receptor for the heterodimer formed by IL17A and IL17B as part of a heterodimeric complex with IL17RA. Has also been shown to be the cognate receptor for IL17F and to bind IL17A with high affinity without the need for IL17RA. Upon binding of IL17F homodimer triggers downstream activation of TRAF6 and NF-kappa-B signaling pathway. Induces transcriptional activation of IL33, a potent cytokine that stimulates group 2 innate lymphoid cells and adaptive T-helper 2 cells involved in pulmonary allergic response to fungi. Promotes sympathetic innervation of peripheral organs by coordinating the communication between gamma-delta T cells and parenchymal cells. Stimulates sympathetic innervation of thermogenic adipose tissue by driving TGFB1 expression. Binding of IL17A-IL17F to IL17RA-IL17RC heterodimeric receptor complex triggers homotypic interaction of IL17RA and IL17RC chains with TRAF3IP2 adapter through SEFIR domains. This leads to downstream TRAF6-mediated activation of NF-kappa-B and MAPkinase pathways ultimately resulting in transcriptional activation of cytokines, chemokines, antimicrobial peptides and matrix metalloproteinases, with potential strong immune inflammation. Primarily induces neutrophil activation and recruitment at infection and inflammatory sites. Stimulates the production of antimicrobial beta-defensins DEFB1, DEFB103A, and DEFB104A by mucosal epithelial cells, limiting the entry of microbes through the epithelial barriers. The protein is Interleukin-17 receptor C (Il17rc) of Mus musculus (Mouse).